The sequence spans 479 residues: MDITITLDRSEQADYIYQQIYQKLKKEILSRNLLPHSKVPSKRELAENLKVSVNSVNSAYQQLLAEGYLYAIERKGFFVEELDMFSAEEHPPFALPDDLKEIHIDQSDWISFSHMSSDTDHFPIKSWFRCEQKAASRSYRTLGDMSHPQGIYEVRAAITRLISLTRGVKCRPEQMIIGAGTQVLMQLLTELLPKEAVYAMEEPGYRRMYQLLKNAGKQVKTIMLDEKGMSIAEITRQQPDVLVTTPSHQFPSGTIMPVSRRIQLLNWAAEEPRRYIIEDDYDSEFTYDVDSIPALQSLDRFQNVIYMGTFSKSLLPGLRISYMVLPPELLRAYKQRGYDLQTCSSLTQLTLQEFIESGEYQKHIKKMKQHYKEKRERLITALEAEFSGEVTVKGANAGLHFVTEFDTRRTEQDILSHAAGLQLEIFGMSRFNLKENKRQTGRPALIIGFARLKEEDIQEGVQRLFKAVYGHKKIPVTGD.

The HTH gntR-type domain occupies 14 to 82; sequence DYIYQQIYQK…ERKGFFVEEL (69 aa). Residues 42-61 constitute a DNA-binding region (H-T-H motif); sequence KRELAENLKVSVNSVNSAYQ. The residue at position 312 (Lys312) is an N6-(pyridoxal phosphate)lysine.

The protein in the C-terminal section; belongs to the class-I pyridoxal-phosphate-dependent aminotransferase family. It depends on pyridoxal 5'-phosphate as a cofactor.

Its function is as follows. Activates the transcription of the gabTD operon. Is also a repressor of its own expression, both in the presence and absence of GABA. Binds specifically to the DNA region overlapping the -35 region of the gabT promoter and the -10 and +1 regions of the gabR promoter. Principally regulates the utilization of gamma-aminobutyrate. This chain is HTH-type transcriptional regulatory protein GabR (gabR), found in Bacillus subtilis (strain 168).